A 218-amino-acid chain; its full sequence is MGQKVNPTGLRVGIIRDWDAKWYAEKDFASNLHEDLRIRKYIESKLADASVSTVEIERAAKRVNISIHTAKPGMVIGKGGSEVEKLRKELNNLTGKRVHINIVEIKKPDLDAKLVGESIAEQLENRVAFRRAMKQAIQRTMRAGAKGIKVQVAGRLNGADMSRVERFSEGTVPLHTLRADIDYSWVEAHTTYGKLGVKTWIYRGEVLPAKKENSKGGK.

The KH type-2 domain occupies 38–106; it reads IRKYIESKLA…RVHINIVEIK (69 aa).

The protein belongs to the universal ribosomal protein uS3 family. As to quaternary structure, part of the 30S ribosomal subunit. Forms a tight complex with proteins S10 and S14.

Its function is as follows. Binds the lower part of the 30S subunit head. Binds mRNA in the 70S ribosome, positioning it for translation. This is Small ribosomal subunit protein uS3 from Ligilactobacillus salivarius (strain UCC118) (Lactobacillus salivarius).